The sequence spans 368 residues: Agmatine deiminase (368 aa).

Cys357 (amidino-cysteine intermediate) is an active-site residue.

The protein belongs to the agmatine deiminase family. As to quaternary structure, homodimer.

It catalyses the reaction agmatine + H2O = N-carbamoylputrescine + NH4(+). It participates in amine and polyamine biosynthesis; putrescine biosynthesis via agmatine pathway; N-carbamoylputrescine from agmatine: step 1/1. Its function is as follows. Mediates the hydrolysis of agmatine into N-carbamoylputrescine in the arginine decarboxylase (ADC) pathway of putrescine biosynthesis, a basic polyamine. The polypeptide is Agmatine deiminase (Pseudomonas syringae pv. syringae (strain B728a)).